The chain runs to 394 residues: Elongation factor Tu-A (394 aa).

A tr-type G domain is found at 10-204 (KPHVNVGTIG…ALDTYIPEPE (195 aa)). A G1 region spans residues 19–26 (GHVDHGKT). 19-26 (GHVDHGKT) is a binding site for GTP. Residue Thr-26 coordinates Mg(2+). The G2 stretch occupies residues 60-64 (GITIN). The G3 stretch occupies residues 81–84 (DCPG). Residues 81 to 85 (DCPGH) and 136 to 139 (NKCD) contribute to the GTP site. Residues 136 to 139 (NKCD) form a G4 region. The G5 stretch occupies residues 174-176 (SAL).

The protein belongs to the TRAFAC class translation factor GTPase superfamily. Classic translation factor GTPase family. EF-Tu/EF-1A subfamily. As to quaternary structure, monomer.

The protein localises to the cytoplasm. The catalysed reaction is GTP + H2O = GDP + phosphate + H(+). Its function is as follows. GTP hydrolase that promotes the GTP-dependent binding of aminoacyl-tRNA to the A-site of ribosomes during protein biosynthesis. The protein is Elongation factor Tu-A of Vibrio cholerae serotype O1 (strain ATCC 39315 / El Tor Inaba N16961).